We begin with the raw amino-acid sequence, 98 residues long: Large ribosomal subunit protein uL23 (98 aa).

It belongs to the universal ribosomal protein uL23 family. As to quaternary structure, part of the 50S ribosomal subunit. Contacts protein L29, and trigger factor when it is bound to the ribosome.

In terms of biological role, one of the early assembly proteins it binds 23S rRNA. One of the proteins that surrounds the polypeptide exit tunnel on the outside of the ribosome. Forms the main docking site for trigger factor binding to the ribosome. In Lactobacillus delbrueckii subsp. bulgaricus (strain ATCC 11842 / DSM 20081 / BCRC 10696 / JCM 1002 / NBRC 13953 / NCIMB 11778 / NCTC 12712 / WDCM 00102 / Lb 14), this protein is Large ribosomal subunit protein uL23.